A 459-amino-acid polypeptide reads, in one-letter code: Ceramide glucosyltransferase 3 (459 aa).

A helical membrane pass occupies residues 77–97 (LIAIVGFVFVFCLYLIHIIAL). Aspartate 156 is a short sequence motif (D1). Position 208 (aspartate 208) is a short sequence motif, D2. A short sequence motif (D3) is located at residue aspartate 302. Catalysis depends on aspartate 302, which acts as the Proton acceptor. The (Q/R)XXRW signature appears at 338–342 (RICRW). 2 helical membrane-spanning segments follow: residues 367–387 (LIMA…ILIL) and 415–435 (FMLI…KALL).

Belongs to the glycosyltransferase 2 family. As to expression, expressed in pharyngeal intestinal valve, intestinal rectal valve and hypodermis.

Its subcellular location is the membrane. The enzyme catalyses an N-acylsphing-4-enine + UDP-alpha-D-glucose = a beta-D-glucosyl-(1&lt;-&gt;1')-N-acylsphing-4-enine + UDP + H(+). It carries out the reaction an N-acyl-15-methylhexadecasphing-4-enine + UDP-alpha-D-glucose = an N-acyl-1-beta-D-glucosyl-15-methylhexadecasphing-4-enine + UDP + H(+). Its pathway is lipid metabolism; sphingolipid metabolism. Catalyzes the first glycosylation step in glycosphingolipid biosynthesis, the transfer of glucose to ceramide to produce glucosylceramides (GlcCer). GlcCer are known to contribute to the physical properties and physiological functions of membranes and may regulate signal transduction. Seems to be the major active form in the nematode. Only branched-chain sphingoid bases like 15-methylhexadecasphing-4-enine are used for generating complex sphingolipids in Caenorhabditis elegans. Together with cgt-1, plays a role in the trafficking of proteins such as mig-14 to the cell membrane in intestinal cells. The protein is Ceramide glucosyltransferase 3 of Caenorhabditis elegans.